We begin with the raw amino-acid sequence, 130 residues long: UPF0251 protein MmarC5_0986 (130 aa).

This sequence belongs to the UPF0251 family.

The chain is UPF0251 protein MmarC5_0986 from Methanococcus maripaludis (strain C5 / ATCC BAA-1333).